We begin with the raw amino-acid sequence, 348 residues long: D-alanine--D-alanine ligase (348 aa).

In terms of domain architecture, ATP-grasp spans 132–334 (KRVLESIGIP…YPDLIEELVT (203 aa)). 162–217 (LARLTFPIFVKPANMGSSVGISKAQTKVELRKAIQLALTYDSRVLIEQGVVAREIE) provides a ligand contact to ATP. Asp-288, Glu-301, and Asn-303 together coordinate Mg(2+).

It belongs to the D-alanine--D-alanine ligase family. Mg(2+) serves as cofactor. It depends on Mn(2+) as a cofactor.

Its subcellular location is the cytoplasm. It carries out the reaction 2 D-alanine + ATP = D-alanyl-D-alanine + ADP + phosphate + H(+). It functions in the pathway cell wall biogenesis; peptidoglycan biosynthesis. In terms of biological role, cell wall formation. This chain is D-alanine--D-alanine ligase, found in Streptococcus pyogenes serotype M12 (strain MGAS2096).